Reading from the N-terminus, the 727-residue chain is Ankyrin repeat domain-containing protein 6 (727 aa).

ANK repeat units follow at residues 9–38 (ALSE…RVAV), 41–70 (HGRT…DLDV), 74–103 (GDQT…ALDR), 107–136 (DGNT…NVLA), 140–169 (AGNT…RADL), 173–202 (AGDT…SVHE), 206–235 (AGDT…DTTI), and 239–268 (AGQT…VLRF). Positions 277-386 (KRERLKEERR…HRCSSPPPPH (110 aa)) are disordered. Residues 280–296 (RLKEERRAQSVPRDEVA) show a composition bias toward basic and acidic residues. Over residues 298–312 (SKGSVSAGDTPSSEQ) the composition is skewed to polar residues. A compositionally biased stretch (basic and acidic residues) spans 314-324 (VARKEEAREEF). The segment covering 363-379 (KNLHAHNHPKKRNRHRC) has biased composition (basic residues). Residues 417-446 (LINKLENQLEATVEEIKAELGSVQDKMNTK) adopt a coiled-coil conformation. Low complexity predominate over residues 548 to 557 (PAAASDSSPP). 2 disordered regions span residues 548–586 (PAAA…CTGS) and 601–657 (NEAA…TGPH). Polar residues predominate over residues 566–584 (LNSTATQRLQQELSSSDCT). The segment covering 622 to 633 (KSGKSGPTRHRA) has biased composition (basic residues). Positions 682–727 (WYERKIEEARSQANQKAQQDKATLKEHIKSLEEELAKLRTRVQKEN) form a coiled coil.

In terms of assembly, interacts with AXN1, AXN2 and CSNK1E/CKI-epsilon.

In terms of biological role, recruits CKI-epsilon to the beta-catenin degradation complex that consists of AXN1 or AXN2 and GSK3-beta and allows efficient phosphorylation of beta-catenin, thereby inhibiting beta-catenin/Tcf signals. The sequence is that of Ankyrin repeat domain-containing protein 6 (ANKRD6) from Homo sapiens (Human).